A 282-amino-acid chain; its full sequence is E3 ubiquitin-protein ligase Siah1 (282 aa).

A disordered region spans residues 1-28; it reads MSRQTATALPTGTSKCPPSQRVPTLSGT. The RING-type zinc finger occupies 41–76; it reads CPVCFDYVLPPILQCQSGHLVCSNCRPKLTCCPTCR. The tract at residues 90–282 is SBD; sequence VANSVLFPCK…LGINVTISMC (193 aa). The segment at 93–153 adopts an SIAH-type zinc-finger fold; it reads SVLFPCKYAS…VMPHLLHQHK (61 aa). Zn(2+)-binding residues include cysteine 98, cysteine 105, histidine 117, cysteine 121, cysteine 128, cysteine 135, histidine 147, and histidine 152.

This sequence belongs to the SINA (Seven in absentia) family. Homodimer.

The enzyme catalyses S-ubiquitinyl-[E2 ubiquitin-conjugating enzyme]-L-cysteine + [acceptor protein]-L-lysine = [E2 ubiquitin-conjugating enzyme]-L-cysteine + N(6)-ubiquitinyl-[acceptor protein]-L-lysine.. The protein operates within protein modification; protein ubiquitination. Its function is as follows. E3 ubiquitin-protein ligase that mediates ubiquitination and subsequent proteasomal degradation of target proteins. E3 ubiquitin ligases accept ubiquitin from an E2 ubiquitin-conjugating enzyme in the form of a thioester and then directly transfers the ubiquitin to targeted substrates. It probably triggers the ubiquitin-mediated degradation of different substrates. The chain is E3 ubiquitin-protein ligase Siah1 (siah1) from Danio rerio (Zebrafish).